The chain runs to 117 residues: ATP-dependent Clp protease adapter protein ClpS 1 (117 aa).

The segment at 1-33 is disordered; the sequence is MIAMPVRMQQGSEGDGGGPSRGTSVITRTKPKT.

Belongs to the ClpS family. As to quaternary structure, binds to the N-terminal domain of the chaperone ClpA.

Functionally, involved in the modulation of the specificity of the ClpAP-mediated ATP-dependent protein degradation. In Rhizobium meliloti (strain 1021) (Ensifer meliloti), this protein is ATP-dependent Clp protease adapter protein ClpS 1.